A 1149-amino-acid polypeptide reads, in one-letter code: Potassium channel subfamily U member 1 (1149 aa).

Residues 1–24 are Extracellular-facing; the sequence is MFQTKLRNETWEDLPKMSCTTEIQ. The chain crosses the membrane as a helical span at residues 25–45; it reads AAFILSSFVTFFSGLIILLIF. Topologically, residues 46–101 are cytoplasmic; it reads RLIWRSVKKWQIIKGTGIILELFTSGTIARSHVRSLHFQGQFRDHIEMLLSAQTFV. The chain crosses the membrane as a helical span at residues 102-122; the sequence is GQVLVILVFVLSIGSLIIYFI. Over 123–138 the chain is Extracellular; sequence NSADPVGSCSSYEDKT. A helical membrane pass occupies residues 139 to 159; the sequence is IPIDLVFNAFFSFYFGLRFMA. At 160–163 the chain is on the cytoplasmic side; that stretch reads ADDK. Residues 164–184 traverse the membrane as a helical segment; that stretch reads IKFWLEMNSIVDIFTIPPTFI. The Extracellular segment spans residues 185–188; the sequence is SYYL. The chain crosses the membrane as a helical; Voltage-sensor span at residues 189 to 209; that stretch reads KSNWLGLRFLRALRLLELPQI. At 210 to 226 the chain is on the cytoplasmic side; sequence LQILRAIKTSNSVKFSK. A helical transmembrane segment spans residues 227 to 247; that stretch reads LLSIILSTWFTAAGFIHLVEN. Over 248-259 the chain is Extracellular; sequence SGDPWLKGRNSQ. Residues 260–282 constitute an intramembrane region (pore-forming); sequence NISYFESIYLVMATTSTVGFGDV. The Selectivity for potassium motif lies at 276–279; the sequence is TVGF. Residues 283–291 are Extracellular-facing; the sequence is VAKTSLGRT. A helical transmembrane segment spans residues 292–312; it reads FIMFFTLGSLILFANYIPEMV. The Cytoplasmic segment spans residues 313-1149; that stretch reads ELFANKRKYT…EDPFAYSEPL (837 aa). RCK N-terminal domains follow at residues 331–473 and 713–884; these read KKFI…DNII and RNHI…EGSL. Disordered stretches follow at residues 828–854 and 1118–1149; these read QIDS…NEKS and SQIP…SEPL. Residues 830–840 are compositionally biased toward low complexity; sequence DSSSDPSPSVS. A compositionally biased stretch (basic and acidic residues) spans 1125-1135; it reads NAKENERKTSD.

This sequence belongs to the potassium channel family. Calcium-activated (TC 1.A.1.3) subfamily. KCa5.1/KCNU1 sub-subfamily. As to quaternary structure, homotetramer; which constitutes the activated potassium channel. Interacts with LRRC52; this interaction changes channel gating properties, such as shifting gating to more negative potentials at a given pH. In terms of tissue distribution, testis-specific.

The protein resides in the cell membrane. It is found in the cell projection. The protein localises to the cilium. Its subcellular location is the flagellum membrane. The enzyme catalyses K(+)(in) = K(+)(out). Regulated by changes in cytosolic pH; activated by alkalization. Activated by intracellular Ca(2+). Despite strong sequence similarity, human KCNU1 channels are significantly more sensitive to activation by internal Ca(2+) and less pH-sensitive than mouse KCNU1. VU0546110 acts as a selective inhibitor. The auxiliary subunit LRRC52 shifts the activation of KCNU1 to more negative potentials at a given pH. Testis-specific potassium channel activated by both intracellular pH and membrane voltage that mediates export of K(+). Represents the primary spermatozoan K(+) current. The channel underlies a pH-triggered membrane hyperpolarization during the process of sperm capacitation, as sperm encounter the alkaline environment near the ovum in the female reproductive tract, thereby playing an essential for male fertility. This Homo sapiens (Human) protein is Potassium channel subfamily U member 1.